Reading from the N-terminus, the 209-residue chain is Response regulator protein VraR (209 aa).

In terms of domain architecture, Response regulatory spans K4–Y120. A 4-aspartylphosphate modification is found at D55. One can recognise an HTH luxR-type domain in the interval R141–N206. A DNA-binding region (H-T-H motif) is located at residues N165–S184.

In terms of processing, phosphorylated by VraS.

It is found in the cytoplasm. In terms of biological role, member of the two-component regulatory system VraS/VraR involved in the control of the cell wall peptidoglycan biosynthesis. In Staphylococcus saprophyticus subsp. saprophyticus (strain ATCC 15305 / DSM 20229 / NCIMB 8711 / NCTC 7292 / S-41), this protein is Response regulator protein VraR (vraR).